The primary structure comprises 211 residues: Leucine efflux protein (211 aa).

6 consecutive transmembrane segments (helical) span residues 5 to 25 (FGVLNFWTYVVGAFFIVLVPG), 49 to 69 (GVFIGDAVLMFLAWAGVAALI), 72 to 92 (TPVLFNIVRYLGALYLLWLGG), 122 to 142 (VLSLTNPKAILFYVSFFVQFI), 153 to 173 (FLILATTLELISFMYMSFLIF), and 191 to 211 (LGNGLIGLLFVGFAARLASLH).

The protein belongs to the Rht family.

Its subcellular location is the cell inner membrane. It catalyses the reaction L-leucine(in) + H(+)(out) = L-leucine(out) + H(+)(in). In terms of biological role, exporter of leucine. This is Leucine efflux protein (leuE) from Enterobacter sp. (strain 638).